The chain runs to 554 residues: DNA ligase B (554 aa).

Lys-122 serves as the catalytic N6-AMP-lysine intermediate.

This sequence belongs to the NAD-dependent DNA ligase family. LigB subfamily.

It carries out the reaction NAD(+) + (deoxyribonucleotide)n-3'-hydroxyl + 5'-phospho-(deoxyribonucleotide)m = (deoxyribonucleotide)n+m + AMP + beta-nicotinamide D-nucleotide.. Its function is as follows. Catalyzes the formation of phosphodiester linkages between 5'-phosphoryl and 3'-hydroxyl groups in double-stranded DNA using NAD as a coenzyme and as the energy source for the reaction. The polypeptide is DNA ligase B (Pseudomonas fluorescens (strain SBW25)).